The primary structure comprises 313 residues: Ribosomal RNA small subunit methyltransferase H (313 aa).

Residues 35 to 37 (GGH), Asp-55, Phe-79, Asp-101, and Gln-108 each bind S-adenosyl-L-methionine.

The protein belongs to the methyltransferase superfamily. RsmH family.

It is found in the cytoplasm. It carries out the reaction cytidine(1402) in 16S rRNA + S-adenosyl-L-methionine = N(4)-methylcytidine(1402) in 16S rRNA + S-adenosyl-L-homocysteine + H(+). Its function is as follows. Specifically methylates the N4 position of cytidine in position 1402 (C1402) of 16S rRNA. This Salmonella newport (strain SL254) protein is Ribosomal RNA small subunit methyltransferase H.